Consider the following 372-residue polypeptide: MNSGIDLQGSFIETLQSFGLSHEIAKTIWLPLPLLLMIIGATVGVLVVVWLERKISAAAQQRVGPEYAGPLGVLQPVADGLKLVFKEDVVPAKTDPWLFTLGPALVVIPVFLSYLIVPFGQNLVITDLNVGIFLWISLSSIAPIGLLMSGYSSNNKYALLGGLRAAAQSISYEIPLALAVLAIAMMSNSLSTIDIVEQQSGYGILGWNIWRQPVGFLIFWIAALAECERLPFDLPEAEEELVAGYQTEYAGMKFGLFYVGSYVNLVLSALIVSILYLGGWEFPIPLDKLAGWLNVAPSTPWLQVITASLGIIMTLVKTYALVFIAVLLRWTLPRVRIDQLLNFGWKFLLPVALVNLLLTAALKLAFPIAFGG.

Helical transmembrane passes span 28–48, 97–117, 130–150, 176–196, 204–224, 265–285, 308–328, and 351–371; these read IWLP…VLVV, WLFT…YLIV, VGIF…LMSG, LALA…IDIV, ILGW…IAAL, LVLS…FPIP, SLGI…AVLL, and VALV…IAFG.

Belongs to the complex I subunit 1 family. In terms of assembly, NDH-1 is composed of at least 11 different subunits.

The protein resides in the cellular thylakoid membrane. It carries out the reaction a plastoquinone + NADH + (n+1) H(+)(in) = a plastoquinol + NAD(+) + n H(+)(out). The enzyme catalyses a plastoquinone + NADPH + (n+1) H(+)(in) = a plastoquinol + NADP(+) + n H(+)(out). Functionally, NDH-1 shuttles electrons from an unknown electron donor, via FMN and iron-sulfur (Fe-S) centers, to quinones in the respiratory and/or the photosynthetic chain. The immediate electron acceptor for the enzyme in this species is believed to be plastoquinone. Couples the redox reaction to proton translocation, and thus conserves the redox energy in a proton gradient. The polypeptide is NAD(P)H-quinone oxidoreductase subunit 1 (Picosynechococcus sp. (strain ATCC 27264 / PCC 7002 / PR-6) (Agmenellum quadruplicatum)).